We begin with the raw amino-acid sequence, 152 residues long: MSTVPVKIKPLDHYEGLALPAYETPQSAGMDLRAAVPADEPVSIPPGEWRLIPVGIAIALPAGFEAQVRPRSGLAAKHGISCVNTPGTVDADYRGEIRVNLINHGQANFVVNRGDRIAQMIIAPVTQAVWEIADTLDETTRGTGGFGSTGTK.

Residues 71 to 73, N84, and 88 to 90 contribute to the substrate site; these read RSG and TVD.

The protein belongs to the dUTPase family. It depends on Mg(2+) as a cofactor.

It carries out the reaction dUTP + H2O = dUMP + diphosphate + H(+). The protein operates within pyrimidine metabolism; dUMP biosynthesis; dUMP from dCTP (dUTP route): step 2/2. Its function is as follows. This enzyme is involved in nucleotide metabolism: it produces dUMP, the immediate precursor of thymidine nucleotides and it decreases the intracellular concentration of dUTP so that uracil cannot be incorporated into DNA. This is Deoxyuridine 5'-triphosphate nucleotidohydrolase from Maricaulis maris (strain MCS10) (Caulobacter maris).